A 408-amino-acid chain; its full sequence is (R)-2-hydroxyisocaproyl-CoA dehydratase alpha subunit (408 aa).

Glu55 serves as a coordination point for substrate. Residues Cys84, Cys117, and Cys346 each contribute to the [4Fe-4S] cluster site.

The protein belongs to the FldB/FldC dehydratase alpha/beta subunit family. As to quaternary structure, part of the heterodimeric complex HadBC composed of (R)-2-hydroxyisocaproyl-CoA dehydratase alpha (HadB) and beta (HadC) subunit. [4Fe-4S] cluster is required as a cofactor.

It carries out the reaction (R)-2-hydroxy-4-methylpentanoyl-CoA = 4-methylpent-2-enoyl-CoA + H2O. With respect to regulation, activated by HadI. Involved in the reductive branch of L-leucine fermentation. Catalyzes the irreversible beta/alpha-elimination of water from (R)-2-hydroxyisocaproyl-CoA to yield isocaprenoyl-CoA. This beta/alpha-dehydration depends on the reductive formation of ketyl radicals on the substrate generated by injection of a single electron from the ATP-dependent activator protein HadI. The enzyme is specific for the R-isomer. This Clostridioides difficile (Peptoclostridium difficile) protein is (R)-2-hydroxyisocaproyl-CoA dehydratase alpha subunit.